The following is a 347-amino-acid chain: NADH-quinone oxidoreductase subunit H (347 aa).

The next 9 helical transmembrane spans lie at 13–33 (LIIALKSVVLLVVLLIVVAYL), 50–70 (PNVVGPWGLFQAFADLLKFVF), 82–102 (GVFLLAPFISAVLAMATWAVI), 115–135 (VGILYIFAISSLEVYGVIMGG), 161–181 (IGFVIVTVLLTVGSLNLTDIV), 198–218 (FLDWNWLCLFPMFVVFFISAL), 248–268 (FLLFFLGEYVAITLMCALMTV), 286–306 (VPGIIWFMLKLCFCFFLFAMV), and 325–345 (VFLPISLFMVVATATFLKVFG).

It belongs to the complex I subunit 1 family. As to quaternary structure, NDH-1 is composed of 14 different subunits. Subunits NuoA, H, J, K, L, M, N constitute the membrane sector of the complex.

The protein localises to the cell inner membrane. It catalyses the reaction a quinone + NADH + 5 H(+)(in) = a quinol + NAD(+) + 4 H(+)(out). Functionally, NDH-1 shuttles electrons from NADH, via FMN and iron-sulfur (Fe-S) centers, to quinones in the respiratory chain. The immediate electron acceptor for the enzyme in this species is believed to be ubiquinone. Couples the redox reaction to proton translocation (for every two electrons transferred, four hydrogen ions are translocated across the cytoplasmic membrane), and thus conserves the redox energy in a proton gradient. This subunit may bind ubiquinone. This Brucella ovis (strain ATCC 25840 / 63/290 / NCTC 10512) protein is NADH-quinone oxidoreductase subunit H.